The primary structure comprises 99 residues: MICOS complex subunit MIC10 (99 aa).

Helical transmembrane passes span 27–43 (RFVYSSLGGAFAGLLFF) and 50–66 (WASIAFGAGIGIGSAYT).

The protein belongs to the MICOS complex subunit Mic10 family. Component of the mitochondrial contact site and cristae organizing system (MICOS) complex. The MICOS complex associates with mitochondrial outer membrane proteins. Present in a large lipid-enriched complex called mitochondrial transmembrane lipoprotein (MTL) complex made of proteins located in the two mitochondrial membranes, including the TOM complex and the core components of the MICOS complex and containing at least digalactosyldiacylglycerol (DGDG).

It localises to the mitochondrion inner membrane. Functionally, component of the MICOS complex, a large protein complex of the mitochondrial inner membrane that plays crucial roles in the maintenance of crista junctions, inner membrane architecture, and formation of contact sites to the outer membrane. This chain is MICOS complex subunit MIC10, found in Arabidopsis thaliana (Mouse-ear cress).